We begin with the raw amino-acid sequence, 467 residues long: Transcriptional regulator of yeast form adherence 6 (467 aa).

Residues Asn43–Thr52 are compositionally biased toward polar residues. Disordered regions lie at residues Asn43–Ser83, Gly128–Asn149, Glu245–Ser275, Asn312–Lys365, and Ser390–Arg439. Positions Glu92 to Leu173 constitute a bHLH domain. Low complexity-rich tracts occupy residues Val257 to Ser275 and Asn312 to Asn322. Polar residues predominate over residues Pro323–Pro338. A compositionally biased stretch (low complexity) spans Ser345–Lys365. Residues Gly417 to Asp432 show a composition bias toward polar residues.

It localises to the nucleus. Transcription factor required for yeast cell adherence to silicone substrate. The protein is Transcriptional regulator of yeast form adherence 6 (TRY6) of Candida albicans (strain SC5314 / ATCC MYA-2876) (Yeast).